Consider the following 353-residue polypeptide: Probable dual-specificity RNA methyltransferase RlmN (353 aa).

Glu-90 (proton acceptor) is an active-site residue. The 231-residue stretch at 96–326 (YKHGNSICIS…VTTRREMGSD (231 aa)) folds into the Radical SAM core domain. Residues Cys-103 and Cys-331 are joined by a disulfide bond. Residues Cys-110, Cys-114, and Cys-117 each coordinate [4Fe-4S] cluster. S-adenosyl-L-methionine contacts are provided by residues 157-158 (GE), Ser-189, 212-214 (SLH), and Asn-288. Catalysis depends on Cys-331, which acts as the S-methylcysteine intermediate.

Belongs to the radical SAM superfamily. RlmN family. [4Fe-4S] cluster is required as a cofactor.

The protein resides in the cytoplasm. It carries out the reaction adenosine(2503) in 23S rRNA + 2 reduced [2Fe-2S]-[ferredoxin] + 2 S-adenosyl-L-methionine = 2-methyladenosine(2503) in 23S rRNA + 5'-deoxyadenosine + L-methionine + 2 oxidized [2Fe-2S]-[ferredoxin] + S-adenosyl-L-homocysteine. It catalyses the reaction adenosine(37) in tRNA + 2 reduced [2Fe-2S]-[ferredoxin] + 2 S-adenosyl-L-methionine = 2-methyladenosine(37) in tRNA + 5'-deoxyadenosine + L-methionine + 2 oxidized [2Fe-2S]-[ferredoxin] + S-adenosyl-L-homocysteine. Functionally, specifically methylates position 2 of adenine 2503 in 23S rRNA and position 2 of adenine 37 in tRNAs. This Clostridium beijerinckii (strain ATCC 51743 / NCIMB 8052) (Clostridium acetobutylicum) protein is Probable dual-specificity RNA methyltransferase RlmN.